The chain runs to 43 residues: NCIDFGGDCDGEKDDCQCCXRNGYCSCYNLFGYLKRGCKXEVG.

3 cysteine pairs are disulfide-bonded: Cys2-Cys19, Cys9-Cys25, and Cys27-Cys38.

It belongs to the neurotoxin 04 (omega-agtx) family. 03 (type II/III omega-agtx) subfamily. Expressed by the venom gland.

The protein resides in the secreted. Functionally, omega-agatoxins are antagonists of voltage-gated calcium channels (Cav). The sequence is that of Omega-agatoxin-Aa3c from Agelenopsis aperta (North American funnel-web spider).